The primary structure comprises 228 residues: Lipoprotein-releasing system ATP-binding protein LolD (228 aa).

Residues 7–228 (LNCQNLTKDY…MQDGVLRPEM (222 aa)) form the ABC transporter domain. Position 43 to 50 (43 to 50 (GSSGSGKS)) interacts with ATP.

It belongs to the ABC transporter superfamily. Lipoprotein translocase (TC 3.A.1.125) family. As to quaternary structure, the complex is composed of two ATP-binding proteins (LolD) and two transmembrane proteins (LolC and LolE).

Its subcellular location is the cell inner membrane. In terms of biological role, part of the ABC transporter complex LolCDE involved in the translocation of mature outer membrane-directed lipoproteins, from the inner membrane to the periplasmic chaperone, LolA. Responsible for the formation of the LolA-lipoprotein complex in an ATP-dependent manner. This Mannheimia succiniciproducens (strain KCTC 0769BP / MBEL55E) protein is Lipoprotein-releasing system ATP-binding protein LolD.